Reading from the N-terminus, the 878-residue chain is Alanine--tRNA ligase (878 aa).

The Zn(2+) site is built by histidine 566, histidine 570, cysteine 668, and histidine 672.

It belongs to the class-II aminoacyl-tRNA synthetase family. Zn(2+) serves as cofactor.

The protein localises to the cytoplasm. The catalysed reaction is tRNA(Ala) + L-alanine + ATP = L-alanyl-tRNA(Ala) + AMP + diphosphate. In terms of biological role, catalyzes the attachment of alanine to tRNA(Ala) in a two-step reaction: alanine is first activated by ATP to form Ala-AMP and then transferred to the acceptor end of tRNA(Ala). Also edits incorrectly charged Ser-tRNA(Ala) and Gly-tRNA(Ala) via its editing domain. The chain is Alanine--tRNA ligase from Bacillus velezensis (strain DSM 23117 / BGSC 10A6 / LMG 26770 / FZB42) (Bacillus amyloliquefaciens subsp. plantarum).